The chain runs to 952 residues: Anion exchange protein 4 (952 aa).

The disordered stretch occupies residues 1-41 (MKLPGQGDFESSDAHENAHSEEPDSGLGPGPGLNGPSGIDI). Positions 12–22 (SDAHENAHSEE) are enriched in basic and acidic residues. Helical transmembrane passes span 385 to 405 (AVFYIYLATVTNAITFGGLLG), 413 to 433 (GVLESFLGTAVAGAAFCLMAG), 470 to 490 (VGIWVTAFCLALVATEASLLV), and 501 to 521 (FCALISLIFIYDAMGKMLNLI). 2 N-linked (GlcNAc...) asparagine glycosylation sites follow: N546 and N569. 7 helical membrane-spanning segments follow: residues 593 to 613 (VPDIAFFSLLLFFTSFLCAIA), 634 to 654 (FSSVLAILLGCGLDTFLGLAT), 681 to 701 (PWWLSVAAALPALLLSILIFM), 727 to 747 (LFCVAVLMLFTSALGLPWYVS), 784 to 804 (GLVVFVLTGVSIFLAPVLKFI), 807 to 827 (PVLYGIFLYMGVAALSSIQFV), and 870 to 890 (VVKSTPAAIVFPLMLLGLVAI). A disordered region spans residues 915 to 938 (ETIPENRSEPEHLFSGNDSEDSEL). 3 N-linked (GlcNAc...) asparagine glycosylation sites follow: N920, N931, and N948.

It belongs to the anion exchanger (TC 2.A.31) family. In terms of tissue distribution, expressed in submandibular gland (SMG) duct and cortical collecting duct (CCD) of kidney. Lower expressed in duodenal villi.

Its subcellular location is the basolateral cell membrane. The enzyme catalyses 2 hydrogencarbonate(out) + chloride(in) + Na(+)(out) = 2 hydrogencarbonate(in) + chloride(out) + Na(+)(in). The catalysed reaction is K(+)(in) + 2 hydrogencarbonate(in) + chloride(out) = K(+)(out) + 2 hydrogencarbonate(out) + chloride(in). It catalyses the reaction Li(+)(in) + 2 hydrogencarbonate(in) + chloride(out) = Li(+)(out) + 2 hydrogencarbonate(out) + chloride(in). It carries out the reaction Rb(+)(in) + 2 hydrogencarbonate(in) + chloride(out) = Rb(+)(out) + 2 hydrogencarbonate(out) + chloride(in). The enzyme catalyses Cs(+)(in) + 2 hydrogencarbonate(in) + chloride(out) = Cs(+)(out) + 2 hydrogencarbonate(out) + chloride(in). With respect to regulation, cl(-)/HCO3(-) exchanger activity is substantially increased in response to 5 uM isoproterenol. Cl(-)/HCO3(-) exchanger activity is increased by both forskolin and coexpression with the catalytic subunit alpha of PKA. In terms of biological role, electroneutral Cl(-)/HCO3(-) antiporter that favors chloride ion entry and efflux of hydrogencarbonate and sodium ion across the basolateral membrane and may participate in salivary secretion. Also mediates Cl(-)/HCO3(-) exchange activity in the presence of K(+) as well as Cs(+), Li(+), and Rb(+). Does not contribute to Cl(-)/HCO3(-) exchanger in the apical membrane of the upper villous epithelium. The polypeptide is Anion exchange protein 4 (Mus musculus (Mouse)).